The sequence spans 383 residues: MPSGCRCLHLVCLLCILGAPGQPVRADDCSSHCDLAHGCCAPDGSCRCDPGWEGLHCERCVRMPGCQHGTCHQPWQCICHSGWAGKFCDKDEHICTTQSPCQNGGQCMYDGGGEYHCVCLPGFHGRDCERKAGPCEQAGSPCRNGGQCQDDQGFALNFTCRCLVGFVGARCEVNVDDCLMRPCANGATCLDGINRFSCLCPEGFAGRFCTINLDDCASRPCQRGARCRDRVHDFDCLCPSGYGGKTCELVLPVPDPPTTVDTPLGPTSAVVVPATGPAPHSAGAGLLRISVKEVVRRQEAGLGEPSLVALVVFGALTAALVLATVLLTLRAWRRGVCPPGPCCYPAPHYAPACQDQECQVSMLPAGLPLPRDLPPEPGKTTAL.

The signal sequence occupies residues 1 to 26 (MPSGCRCLHLVCLLCILGAPGQPVRA). 4 EGF-like domains span residues 27 to 58 (DDCS…LHCE), 62 to 89 (RMPG…KFCD), 91 to 129 (DEHI…RDCE), and 131 to 172 (KAGP…ARCE). Over 27–306 (DDCSSHCDLA…RQEAGLGEPS (280 aa)) the chain is Extracellular. 17 disulfide bridges follow: Cys29–Cys40, Cys33–Cys46, Cys48–Cys57, Cys66–Cys71, Cys79–Cys88, Cys95–Cys107, Cys101–Cys117, Cys119–Cys128, Cys135–Cys148, Cys142–Cys160, Cys162–Cys171, Cys178–Cys189, Cys183–Cys198, Cys200–Cys209, Cys216–Cys227, Cys221–Cys236, and Cys238–Cys247. N-linked (GlcNAc...) asparagine glycosylation is present at Asn157. An EGF-like 5; calcium-binding domain is found at 174–210 (NVDDCLMRPCANGATCLDGINRFSCLCPEGFAGRFCT). Residues 212 to 248 (NLDDCASRPCQRGARCRDRVHDFDCLCPSGYGGKTCE) enclose the EGF-like 6; calcium-binding domain. A helical membrane pass occupies residues 307 to 327 (LVALVVFGALTAALVLATVLL). The Cytoplasmic segment spans residues 328–383 (TLRAWRRGVCPPGPCCYPAPHYAPACQDQECQVSMLPAGLPLPRDLPPEPGKTTAL).

Its subcellular location is the membrane. Regulates adipogenesis. The chain is Protein delta homolog 2 (DLK2) from Homo sapiens (Human).